The primary structure comprises 236 residues: Virion protein US10 homolog (236 aa).

Residues 1 to 32 are disordered; sequence MDGAYGHVHNGSPMAVDGEESGAGTGTGAGAD. Over residues 21-31 the composition is skewed to gly residues; it reads SGAGTGTGAGA. Residues 138-150 fold into a zinc finger; it reads CAYWCCLGHAFAC.

The protein belongs to the herpesviridae US10 family. In terms of processing, phosphorylated.

The protein localises to the virion tegument. Its subcellular location is the host nucleus matrix. The polypeptide is Virion protein US10 homolog (IR5) (Equine herpesvirus 1 (strain Kentucky A) (EHV-1)).